Reading from the N-terminus, the 316-residue chain is 4-hydroxy-3-methylbut-2-enyl diphosphate reductase (316 aa).

[4Fe-4S] cluster is bound at residue C12. H41 and H74 together coordinate (2E)-4-hydroxy-3-methylbut-2-enyl diphosphate. Dimethylallyl diphosphate-binding residues include H41 and H74. Positions 41 and 74 each coordinate isopentenyl diphosphate. A [4Fe-4S] cluster-binding site is contributed by C96. Residue H124 participates in (2E)-4-hydroxy-3-methylbut-2-enyl diphosphate binding. Residue H124 participates in dimethylallyl diphosphate binding. H124 is a binding site for isopentenyl diphosphate. Residue E126 is the Proton donor of the active site. T167 is a binding site for (2E)-4-hydroxy-3-methylbut-2-enyl diphosphate. Residue C197 participates in [4Fe-4S] cluster binding. Residues S225, S226, N227, and S269 each coordinate (2E)-4-hydroxy-3-methylbut-2-enyl diphosphate. The dimethylallyl diphosphate site is built by S225, S226, N227, and S269. Isopentenyl diphosphate contacts are provided by S225, S226, N227, and S269.

Belongs to the IspH family. Homodimer. Requires [4Fe-4S] cluster as cofactor.

The catalysed reaction is isopentenyl diphosphate + 2 oxidized [2Fe-2S]-[ferredoxin] + H2O = (2E)-4-hydroxy-3-methylbut-2-enyl diphosphate + 2 reduced [2Fe-2S]-[ferredoxin] + 2 H(+). The enzyme catalyses dimethylallyl diphosphate + 2 oxidized [2Fe-2S]-[ferredoxin] + H2O = (2E)-4-hydroxy-3-methylbut-2-enyl diphosphate + 2 reduced [2Fe-2S]-[ferredoxin] + 2 H(+). Its pathway is isoprenoid biosynthesis; dimethylallyl diphosphate biosynthesis; dimethylallyl diphosphate from (2E)-4-hydroxy-3-methylbutenyl diphosphate: step 1/1. It functions in the pathway isoprenoid biosynthesis; isopentenyl diphosphate biosynthesis via DXP pathway; isopentenyl diphosphate from 1-deoxy-D-xylulose 5-phosphate: step 6/6. Catalyzes the conversion of 1-hydroxy-2-methyl-2-(E)-butenyl 4-diphosphate (HMBPP) into a mixture of isopentenyl diphosphate (IPP) and dimethylallyl diphosphate (DMAPP). Acts in the terminal step of the DOXP/MEP pathway for isoprenoid precursor biosynthesis. This is 4-hydroxy-3-methylbut-2-enyl diphosphate reductase from Salmonella typhi.